The following is a 213-amino-acid chain: Ripening-related protein 3 (213 aa).

A signal peptide spans 1-32 (MAGAMTMSRRRLSHALLLVLAILPNLAALAVA).

This sequence belongs to the kiwellin family.

The protein localises to the secreted. The polypeptide is Ripening-related protein 3 (Oryza sativa subsp. japonica (Rice)).